A 223-amino-acid chain; its full sequence is Large ribosomal subunit protein uL4 (223 aa).

The segment at 49-106 is disordered; the sequence is AAARQGTHSTKTRGEVSGGGRKPYRQKGTGRARQGSTRAPQFTGGGVVHGPKPRDYSQ.

The protein belongs to the universal ribosomal protein uL4 family. In terms of assembly, part of the 50S ribosomal subunit.

Its function is as follows. One of the primary rRNA binding proteins, this protein initially binds near the 5'-end of the 23S rRNA. It is important during the early stages of 50S assembly. It makes multiple contacts with different domains of the 23S rRNA in the assembled 50S subunit and ribosome. Forms part of the polypeptide exit tunnel. This chain is Large ribosomal subunit protein uL4, found in Mycobacterium bovis (strain ATCC BAA-935 / AF2122/97).